We begin with the raw amino-acid sequence, 953 residues long: Glutamate receptor 3.5 (953 aa).

A signal peptide spans 1–29 (MGFFVMIRDVSMGFMLLCISALWVLPIQG). Topologically, residues 30–606 (AGRESFSRNS…SPWSFLKPFT (577 aa)) are extracellular. Asparagine 38, asparagine 95, asparagine 223, asparagine 371, asparagine 397, asparagine 436, asparagine 454, and asparagine 569 each carry an N-linked (GlcNAc...) asparagine glycan. The helical transmembrane segment at 607–627 (IEMWAVTGALFLFVGAVIWIL) threads the bilayer. At 628–636 (EHRFNEEFR) the chain is on the cytoplasmic side. A helical membrane pass occupies residues 637–657 (GPPRRQIITVFWFSFSTMFFS). Topologically, residues 658 to 668 (HRENTVSTLGR) are cytoplasmic. Residues 669-689 (FVLLVWLFVVLIINSSYTASL) form a helical membrane-spanning segment. Topologically, residues 690 to 850 (TSILTVQQLT…TENYQISVQS (161 aa)) are extracellular. A helical transmembrane segment spans residues 851-871 (FWGLFLICGVVWFIALTLFCW). At 872-953 (KVFWQYQRLR…SQSKDHETPQ (82 aa)) the chain is on the cytoplasmic side. The interval 928 to 953 (EKSSKKLKDGQSSAENSQSKDHETPQ) is disordered.

The protein belongs to the glutamate-gated ion channel (TC 1.A.10.1) family. May form heteromers. Expressed predominantly in roots. Also detected in shoots.

The protein localises to the membrane. Glutamate-gated receptor that probably acts as a non-selective cation channel. May be involved in light-signal transduction and calcium homeostasis via the regulation of calcium influx into cells. This Arabidopsis thaliana (Mouse-ear cress) protein is Glutamate receptor 3.5 (GLR3.5).